Consider the following 185-residue polypeptide: MINDVLKEAEDRMVKAVEALKREYATIRAGRANPNMLDKITVEYYGTQTPVNQLANISVPEPRMLTIQPWDKSSLPMIEKAILKSDLGLNPSSDGTVIRLLIPQLTAERRTEIVKTVKKKAEDSRVAVRNIRRDSNDELKKLEKDHTASEDEVKRAQDDVQKMTDKFVKEIERIMGTKEKEIMEV.

The segment at 137 to 158 (DELKKLEKDHTASEDEVKRAQD) is disordered.

It belongs to the RRF family.

It is found in the cytoplasm. Responsible for the release of ribosomes from messenger RNA at the termination of protein biosynthesis. May increase the efficiency of translation by recycling ribosomes from one round of translation to another. The sequence is that of Ribosome-recycling factor from Desulfitobacterium hafniense (strain Y51).